A 629-amino-acid polypeptide reads, in one-letter code: 1-deoxy-D-xylulose-5-phosphate synthase (629 aa).

Residues His-85 and 126-128 (GHS) contribute to the thiamine diphosphate site. Asp-157 lines the Mg(2+) pocket. Residues 158 to 159 (GS), Asn-186, Tyr-293, and Glu-373 contribute to the thiamine diphosphate site. A Mg(2+)-binding site is contributed by Asn-186.

Belongs to the transketolase family. DXPS subfamily. In terms of assembly, homodimer. It depends on Mg(2+) as a cofactor. Requires thiamine diphosphate as cofactor.

The enzyme catalyses D-glyceraldehyde 3-phosphate + pyruvate + H(+) = 1-deoxy-D-xylulose 5-phosphate + CO2. It functions in the pathway metabolic intermediate biosynthesis; 1-deoxy-D-xylulose 5-phosphate biosynthesis; 1-deoxy-D-xylulose 5-phosphate from D-glyceraldehyde 3-phosphate and pyruvate: step 1/1. In terms of biological role, catalyzes the acyloin condensation reaction between C atoms 2 and 3 of pyruvate and glyceraldehyde 3-phosphate to yield 1-deoxy-D-xylulose-5-phosphate (DXP). This chain is 1-deoxy-D-xylulose-5-phosphate synthase, found in Helicobacter hepaticus (strain ATCC 51449 / 3B1).